A 907-amino-acid polypeptide reads, in one-letter code: Potassium channel AKT3 (907 aa).

Over 1–75 (MPTTKCAVPL…YDRRYELWNN (75 aa)) the chain is Cytoplasmic. The chain crosses the membrane as a helical span at residues 76-96 (YLILLVVYSAWVTPFEFGFVP). At 97 to 102 (EPAGAL) the chain is on the extracellular side. A helical membrane pass occupies residues 103–123 (AAADNAVNAFFAVDIVLTFFV). At 124–146 (AYTDPKTFLLQDDPRKIALRYIT) the chain is on the cytoplasmic side. A helical transmembrane segment spans residues 147–167 (TWFVLDVVATIPTELARRILP). At 168–174 (PDLRSYG) the chain is on the extracellular side. Residues 175-195 (FFGILRLWRLHRVGILFARLE) form a helical; Voltage-sensor membrane-spanning segment. Residues 196–209 (KDRKFSYFWVRCVK) are Cytoplasmic-facing. The helical transmembrane segment at 210–230 (LVCVTLFAVHCSACFYYLLAD) threads the bilayer. At 231–257 (RYPDPTNTWISAYMPNFHKASIWSRYV) the chain is on the extracellular side. The pore-forming intramembrane region spans 258-277 (ASMYWSITTLSTVGYGDMHA). Residues 278–288 (ENTGEMVFTTT) are Extracellular-facing. A helical membrane pass occupies residues 289–309 (YMLFNLGLTAYIIGNMTNLVV). Topologically, residues 310–907 (HGTSRTRKFR…VPPENRSRNQ (598 aa)) are cytoplasmic. 388–512 (LFEGVSNDLI…TIVMNNLIQY (125 aa)) lines the a nucleoside 3',5'-cyclic phosphate pocket. 5 ANK repeats span residues 539 to 568 (DFPITLCFAASKGDSFLLHQLLKRGLDPNE), 572 to 601 (YGRTALHIAASNGNEQCVRLLLENGADSNS), 605 to 634 (EGRVPLWEALCRRHQTVVQLLVDAGADLSG), 636 to 665 (DAAPYARVAVEQNDAALLGEIVRHGGDVSG), and 670 to 699 (DGTTALHRAVLDGNVQMARLLLEHGADADA). Disordered regions lie at residues 726-779 (ATRH…TPQR) and 801-824 (GGYRGGGGGGGAAAERERSSSSPP). Residues 754–776 (SSPSSSSRRGRTSSTSAASARST) are compositionally biased toward low complexity. The segment covering 803–812 (YRGGGGGGGA) has biased composition (gly residues). In terms of domain architecture, KHA spans 827–907 (RVAISCPESR…VPPENRSRNQ (81 aa)).

It belongs to the potassium channel family. Plant (TC 1.A.1.4) subfamily.

Its subcellular location is the membrane. Its function is as follows. Probable inward-rectifying potassium channel. Assuming opened or closed conformations in response to the voltage difference across the membrane, the channel is activated by hyperpolarization. This Oryza sativa subsp. japonica (Rice) protein is Potassium channel AKT3.